The following is a 179-amino-acid chain: uncharacterized protein (179 aa).

The next 4 membrane-spanning stretches (helical) occupy residues 9–31, 41–63, 114–136, and 146–168; these read WILVILFATLLFFAFTGIFVSTL, AFLLGFLGALVFANKLLFGYGSF, AYYGIFTLMLIIMLLSKFDLLGA, and AFWGAAVITLFVFALEITANYLM.

The protein localises to the cell membrane. This is an uncharacterized protein from Aquifex aeolicus (strain VF5).